The sequence spans 187 residues: uncharacterized protein (187 aa).

Residues 42–63 are disordered; sequence RTNGPGKDSFSFSTSGSKPSSS. Low complexity predominate over residues 50 to 63; sequence SFSFSTSGSKPSSS.

This is an uncharacterized protein from Saccharomyces cerevisiae (strain ATCC 204508 / S288c) (Baker's yeast).